The chain runs to 160 residues: Ureidoglycolate lyase (160 aa).

Belongs to the ureidoglycolate lyase family. In terms of assembly, homodimer. Ni(2+) serves as cofactor.

The enzyme catalyses (S)-ureidoglycolate = urea + glyoxylate. It participates in nitrogen metabolism; (S)-allantoin degradation. Catalyzes the catabolism of the allantoin degradation intermediate (S)-ureidoglycolate, generating urea and glyoxylate. Involved in the anaerobic utilization of allantoin as sole nitrogen source. Reinforces the induction of genes involved in the degradation of allantoin and glyoxylate by producing glyoxylate. The sequence is that of Ureidoglycolate lyase from Escherichia coli O6:H1 (strain CFT073 / ATCC 700928 / UPEC).